The following is a 416-amino-acid chain: UDP-N-acetylglucosamine 1-carboxyvinyltransferase (416 aa).

Phosphoenolpyruvate is bound at residue 22–23; it reads KN. UDP-N-acetyl-alpha-D-glucosamine is bound at residue R92. The Proton donor role is filled by C116. Residue C116 is modified to 2-(S-cysteinyl)pyruvic acid O-phosphothioketal. 2 residues coordinate UDP-N-acetyl-alpha-D-glucosamine: D306 and I328.

This sequence belongs to the EPSP synthase family. MurA subfamily.

Its subcellular location is the cytoplasm. The enzyme catalyses phosphoenolpyruvate + UDP-N-acetyl-alpha-D-glucosamine = UDP-N-acetyl-3-O-(1-carboxyvinyl)-alpha-D-glucosamine + phosphate. It functions in the pathway cell wall biogenesis; peptidoglycan biosynthesis. Its function is as follows. Cell wall formation. Adds enolpyruvyl to UDP-N-acetylglucosamine. The sequence is that of UDP-N-acetylglucosamine 1-carboxyvinyltransferase from Buchnera aphidicola subsp. Baizongia pistaciae (strain Bp).